Consider the following 389-residue polypeptide: tRNA pseudouridine synthase Pus10 (389 aa).

The active-site Nucleophile is D213. Substrate contacts are provided by Y278 and Y350.

This sequence belongs to the pseudouridine synthase Pus10 family.

It carries out the reaction uridine(54) in tRNA = pseudouridine(54) in tRNA. The catalysed reaction is uridine(55) in tRNA = pseudouridine(55) in tRNA. Its function is as follows. Responsible for synthesis of pseudouridine from uracil-54 and uracil-55 in the psi GC loop of transfer RNAs. In Thermoplasma acidophilum (strain ATCC 25905 / DSM 1728 / JCM 9062 / NBRC 15155 / AMRC-C165), this protein is tRNA pseudouridine synthase Pus10.